The following is a 120-amino-acid chain: Large ribosomal subunit protein uL14 (120 aa).

Belongs to the universal ribosomal protein uL14 family. As to quaternary structure, part of the 50S ribosomal subunit. Forms a cluster with proteins L3 and L19. In the 70S ribosome, L14 and L19 interact and together make contacts with the 16S rRNA in bridges B5 and B8.

In terms of biological role, binds to 23S rRNA. Forms part of two intersubunit bridges in the 70S ribosome. The sequence is that of Large ribosomal subunit protein uL14 from Dictyoglomus thermophilum (strain ATCC 35947 / DSM 3960 / H-6-12).